Consider the following 278-residue polypeptide: DegV domain-containing protein YejH (278 aa).

A DegV domain is found at Ile3–Tyr277. Positions 60 and 92 each coordinate hexadecanoate.

May bind long-chain fatty acids, such as palmitate, and may play a role in lipid transport or fatty acid metabolism. This is DegV domain-containing protein YejH (yejH) from Lactococcus lactis subsp. lactis (strain IL1403) (Streptococcus lactis).